Consider the following 152-residue polypeptide: Transcriptional regulator MraZ (152 aa).

SpoVT-AbrB domains lie at 5–52 (ATLV…PLPE) and 81–124 (ASEC…DETT).

The protein belongs to the MraZ family. In terms of assembly, forms oligomers.

It is found in the cytoplasm. Its subcellular location is the nucleoid. In terms of biological role, negatively regulates its own expression and that of the subsequent genes in the proximal part of the division and cell wall (dcw) gene cluster. Acts by binding directly to DNA. May also regulate the expression of genes outside the dcw cluster. This chain is Transcriptional regulator MraZ, found in Escherichia coli O127:H6 (strain E2348/69 / EPEC).